Here is a 396-residue protein sequence, read N- to C-terminus: Tryptophan synthase beta chain (396 aa).

Lys-88 bears the N6-(pyridoxal phosphate)lysine mark.

Belongs to the TrpB family. In terms of assembly, tetramer of two alpha and two beta chains. Pyridoxal 5'-phosphate serves as cofactor.

It catalyses the reaction (1S,2R)-1-C-(indol-3-yl)glycerol 3-phosphate + L-serine = D-glyceraldehyde 3-phosphate + L-tryptophan + H2O. The protein operates within amino-acid biosynthesis; L-tryptophan biosynthesis; L-tryptophan from chorismate: step 5/5. The beta subunit is responsible for the synthesis of L-tryptophan from indole and L-serine. The chain is Tryptophan synthase beta chain from Shewanella sp. (strain ANA-3).